Here is a 311-residue protein sequence, read N- to C-terminus: Aspartate carbamoyltransferase catalytic subunit (311 aa).

Positions 58 and 59 each coordinate carbamoyl phosphate. Lys86 is an L-aspartate binding site. Positions 108, 136, and 139 each coordinate carbamoyl phosphate. 2 residues coordinate L-aspartate: Arg169 and Arg223. Residues Gly264 and Pro265 each coordinate carbamoyl phosphate.

Belongs to the aspartate/ornithine carbamoyltransferase superfamily. ATCase family. In terms of assembly, heterododecamer (2C3:3R2) of six catalytic PyrB chains organized as two trimers (C3), and six regulatory PyrI chains organized as three dimers (R2).

It carries out the reaction carbamoyl phosphate + L-aspartate = N-carbamoyl-L-aspartate + phosphate + H(+). It participates in pyrimidine metabolism; UMP biosynthesis via de novo pathway; (S)-dihydroorotate from bicarbonate: step 2/3. Functionally, catalyzes the condensation of carbamoyl phosphate and aspartate to form carbamoyl aspartate and inorganic phosphate, the committed step in the de novo pyrimidine nucleotide biosynthesis pathway. The chain is Aspartate carbamoyltransferase catalytic subunit from Ruegeria pomeroyi (strain ATCC 700808 / DSM 15171 / DSS-3) (Silicibacter pomeroyi).